We begin with the raw amino-acid sequence, 240 residues long: NADPH-flavin oxidoreductase (240 aa).

Residues 11-15, Ser39, 67-69, 128-131, and 167-169 each bind FMN; these read HRSIR, QAY, YIGG, and KPR.

Belongs to the flavin oxidoreductase frp family. In terms of assembly, homodimer.

The enzyme catalyses FMNH2 + NADP(+) = FMN + NADPH + 2 H(+). Functionally, catalyzes the NADPH-dependent reduction of FMN to FMNH(2). Involved in bioluminescence by providing FMNH(2) to luciferase. This is NADPH-flavin oxidoreductase from Vibrio harveyi (Beneckea harveyi).